The sequence spans 89 residues: Large ribosomal subunit protein bL27 (89 aa).

A disordered region spans residues 1–20; it reads MAHKKAGGSSRNGRDSAGRR.

Belongs to the bacterial ribosomal protein bL27 family.

The sequence is that of Large ribosomal subunit protein bL27 from Jannaschia sp. (strain CCS1).